Consider the following 274-residue polypeptide: 2,3,4,5-tetrahydropyridine-2,6-dicarboxylate N-succinyltransferase (274 aa).

Substrate is bound by residues Arg104 and Asp141.

Belongs to the transferase hexapeptide repeat family. As to quaternary structure, homotrimer.

It is found in the cytoplasm. The enzyme catalyses (S)-2,3,4,5-tetrahydrodipicolinate + succinyl-CoA + H2O = (S)-2-succinylamino-6-oxoheptanedioate + CoA. The protein operates within amino-acid biosynthesis; L-lysine biosynthesis via DAP pathway; LL-2,6-diaminopimelate from (S)-tetrahydrodipicolinate (succinylase route): step 1/3. In Shewanella halifaxensis (strain HAW-EB4), this protein is 2,3,4,5-tetrahydropyridine-2,6-dicarboxylate N-succinyltransferase.